Consider the following 111-residue polypeptide: Nucleoid-associated protein lhv_0401 (111 aa).

The protein belongs to the YbaB/EbfC family. As to quaternary structure, homodimer.

The protein resides in the cytoplasm. It localises to the nucleoid. Functionally, binds to DNA and alters its conformation. May be involved in regulation of gene expression, nucleoid organization and DNA protection. The polypeptide is Nucleoid-associated protein lhv_0401 (Lactobacillus helveticus (strain DPC 4571)).